An 845-amino-acid chain; its full sequence is Translation initiation factor IF-2 (845 aa).

2 disordered regions span residues Lys-44 to Ser-91 and Ala-119 to Pro-256. Residues Ala-119–Leu-129 are compositionally biased toward basic and acidic residues. Over residues Asp-139–Pro-148 the composition is skewed to acidic residues. Positions Ser-156–Glu-165 are enriched in polar residues. Basic and acidic residues-rich tracts occupy residues Ile-179–Ser-194 and Ser-202–Arg-217. Positions Leu-343–Asp-510 constitute a tr-type G domain. Residues Gly-352–Thr-359 are G1. GTP is bound at residue Gly-352 to Thr-359. Residues Gly-377 to His-381 form a G2 region. The segment at Asp-398 to Gly-401 is G3. GTP is bound by residues Asp-398–His-402 and Asn-452–Asp-455. A G4 region spans residues Asn-452 to Asp-455. Positions Ser-488–Lys-490 are G5.

It belongs to the TRAFAC class translation factor GTPase superfamily. Classic translation factor GTPase family. IF-2 subfamily.

The protein resides in the cytoplasm. One of the essential components for the initiation of protein synthesis. Protects formylmethionyl-tRNA from spontaneous hydrolysis and promotes its binding to the 30S ribosomal subunits. Also involved in the hydrolysis of GTP during the formation of the 70S ribosomal complex. In Bartonella henselae (strain ATCC 49882 / DSM 28221 / CCUG 30454 / Houston 1) (Rochalimaea henselae), this protein is Translation initiation factor IF-2.